The chain runs to 1218 residues: Probable RNA-dependent RNA polymerase SHL2 (1218 aa).

Belongs to the RdRP family.

It carries out the reaction RNA(n) + a ribonucleoside 5'-triphosphate = RNA(n+1) + diphosphate. Its function is as follows. Involved in the RNA silencing pathway. Probably required for the generation of small interfering RNAs (siRNAs). Regulates shoot apical meristem (SAM) initiation and maintenance and leaf polarization through the trans-acting siRNAS (ta-siRNAs) pathway which probably modulates the expression of the ARF2, ARF3, ARF4, ARF14 and ARF15 genes. The chain is Probable RNA-dependent RNA polymerase SHL2 (SHL2) from Oryza sativa subsp. japonica (Rice).